A 93-amino-acid polypeptide reads, in one-letter code: Co-chaperonin GroES 2 (93 aa).

Residues 1–20 form a disordered region; the sequence is MQPLGERIVVQREESETTTA.

It belongs to the GroES chaperonin family. Heptamer of 7 subunits arranged in a ring. Interacts with the chaperonin GroEL.

It is found in the cytoplasm. Together with the chaperonin GroEL, plays an essential role in assisting protein folding. The GroEL-GroES system forms a nano-cage that allows encapsulation of the non-native substrate proteins and provides a physical environment optimized to promote and accelerate protein folding. GroES binds to the apical surface of the GroEL ring, thereby capping the opening of the GroEL channel. This Rhodopirellula baltica (strain DSM 10527 / NCIMB 13988 / SH1) protein is Co-chaperonin GroES 2.